We begin with the raw amino-acid sequence, 529 residues long: Phenylalanine N-monooxygenase (529 aa).

The chain crosses the membrane as a helical span at residues 1-21; sequence MLDSTPMLAFIIGLLLLALTM. Cysteine 467 provides a ligand contact to heme.

It belongs to the cytochrome P450 family. Requires heme as cofactor.

It is found in the endoplasmic reticulum membrane. It catalyses the reaction L-phenylalanine + 2 reduced [NADPH--hemoprotein reductase] + 2 O2 = (E)-phenylacetaldehyde oxime + 2 oxidized [NADPH--hemoprotein reductase] + CO2 + 3 H2O + 2 H(+). It participates in secondary metabolite biosynthesis; phenylglucosinolate biosynthesis. Its function is as follows. Converts L-phenylalanine into phenylacetaldoxime, the precursor of benzylglucosinolate (glucotropeolin). This Arabidopsis thaliana (Mouse-ear cress) protein is Phenylalanine N-monooxygenase (CYP79A2).